The chain runs to 228 residues: UPF0758 protein MW1604 (228 aa).

An MPN domain is found at 102–224 (KITQPSDVAD…FTSLVEAGYF (123 aa)). Positions 173, 175, and 186 each coordinate Zn(2+). A JAMM motif motif is present at residues 173–186 (HNHPSGDVTPSQED).

The protein belongs to the UPF0758 family.

The chain is UPF0758 protein MW1604 from Staphylococcus aureus (strain MW2).